We begin with the raw amino-acid sequence, 245 residues long: MSFTAVPLTLYPDMFPGPLGHSMAGRALESGTWNCAPVQIRDFATDRHRTVDDTPAGGGAGMVLKADVLAGAIDHAMKAHPGLPVLAMTPRGTPITQARVRELAAGPGAIILCGRFEGFDERIFDARPIEQVSMGDIILSGGEMAALLLLDACIRLLPGVMGAASSGDDESFENGLLEYPHYTRPVTWEGRTIPEVLRSGDHAKIAAWRKQQAEEATRLRRPDLWERHIDARARPASGARRKEED.

Position 114 (glycine 114) interacts with S-adenosyl-L-methionine.

The protein belongs to the RNA methyltransferase TrmD family. In terms of assembly, homodimer.

Its subcellular location is the cytoplasm. The catalysed reaction is guanosine(37) in tRNA + S-adenosyl-L-methionine = N(1)-methylguanosine(37) in tRNA + S-adenosyl-L-homocysteine + H(+). In terms of biological role, specifically methylates guanosine-37 in various tRNAs. The protein is tRNA (guanine-N(1)-)-methyltransferase of Sphingopyxis alaskensis (strain DSM 13593 / LMG 18877 / RB2256) (Sphingomonas alaskensis).